The chain runs to 363 residues: GTPase Obg (363 aa).

Residues 1 to 159 form the Obg domain; the sequence is MKFIDEAKIY…LELRLELRVL (159 aa). Residues 160 to 338 form the OBG-type G domain; it reads ADVGLLGLPN…LIYAISEALE (179 aa). Residues 166 to 173, 191 to 195, 213 to 216, 284 to 287, and 319 to 321 contribute to the GTP site; these read GLPNAGKS, FTTLH, DVPG, NKLD, and AAI. Mg(2+) is bound by residues Ser173 and Thr193. The segment at 342 to 363 is disordered; the sequence is RPEIGDLDDNDEDSDEIIRDTE. Positions 346-356 are enriched in acidic residues; sequence GDLDDNDEDSD.

This sequence belongs to the TRAFAC class OBG-HflX-like GTPase superfamily. OBG GTPase family. As to quaternary structure, monomer. Mg(2+) is required as a cofactor.

The protein localises to the cytoplasm. In terms of biological role, an essential GTPase which binds GTP, GDP and possibly (p)ppGpp with moderate affinity, with high nucleotide exchange rates and a fairly low GTP hydrolysis rate. Plays a role in control of the cell cycle, stress response, ribosome biogenesis and in those bacteria that undergo differentiation, in morphogenesis control. In Dechloromonas aromatica (strain RCB), this protein is GTPase Obg.